Here is an 84-residue protein sequence, read N- to C-terminus: MQDNEIFEKVQDIVAEQLGIEKTIVTREANFSSDLGADSLDTVELVMAIEEKFAIEIPDEDAEKITNLSEVVDFIKSKLNTISV.

One can recognise a Carrier domain in the interval Asn-4–Leu-79. Position 39 is an O-(pantetheine 4'-phosphoryl)serine (Ser-39).

This sequence belongs to the acyl carrier protein (ACP) family. Post-translationally, 4'-phosphopantetheine is transferred from CoA to a specific serine of apo-ACP by AcpS. This modification is essential for activity because fatty acids are bound in thioester linkage to the sulfhydryl of the prosthetic group.

It is found in the plastid. Its subcellular location is the chloroplast. It functions in the pathway lipid metabolism; fatty acid biosynthesis. Functionally, carrier of the growing fatty acid chain in fatty acid biosynthesis. The chain is Acyl carrier protein from Porphyra purpurea (Red seaweed).